We begin with the raw amino-acid sequence, 335 residues long: Methyltransferase pgmE (335 aa).

It belongs to the methyltransferase superfamily.

It functions in the pathway pigment biosynthesis. It participates in secondary metabolite biosynthesis. In terms of biological role, methyltransferase; part of the gene cluster that mediates the biosynthesis of pleosporalin A, ascomycone A, as well as a third cryptic naphthoquinone derived pigment, all responsible for the coloration of conidia. Essential for the production of pleosporalin A, but not the 2 other final products. The pathway begins with the biosynthesis of the cyclized heptaketide 3-acetonyl-1,6,8-trihydroxy-2-naphthaldehyde by the NR-PKS pgmA. The C-6 hydroxyl group is further methylated by the O-methyltransferase pgmB to yield fusarubinaldehyde which is in turn oxidized by the cytochrome P450 monooxygenase pgmC at C-9. The C-1 hydroxyl group is then methylated spontaneously. Although pgmE, pgmD and pgmH are essential for the production of pleosporalin A, it is not the case for the 2 other final products and it remains difficult to assign a specific function to each enzyme. PgmF and pgmG seem not to be involved in pigment biosynthesis although they were regulated by the cluster-specific transcription factor pgmR. The protein is Methyltransferase pgmE of Aspergillus terreus.